Consider the following 181-residue polypeptide: Oligoribonuclease (181 aa).

The 164-residue stretch at 8–171 (LIWIDLEMTG…DDIRESIAEL (164 aa)) folds into the Exonuclease domain. The active site involves Y129.

This sequence belongs to the oligoribonuclease family.

It localises to the cytoplasm. 3'-to-5' exoribonuclease specific for small oligoribonucleotides. This chain is Oligoribonuclease, found in Vibrio cholerae serotype O1 (strain ATCC 39541 / Classical Ogawa 395 / O395).